The following is a 363-amino-acid chain: Pyrimidine monooxygenase RutA (363 aa).

Residues 49-50 (IK), N115, E124, 140-141 (RY), and S190 contribute to the FMN site.

It belongs to the NtaA/SnaA/DszA monooxygenase family. RutA subfamily.

The catalysed reaction is uracil + FMNH2 + NADH + O2 = (Z)-3-ureidoacrylate + FMN + NAD(+) + H2O + H(+). The enzyme catalyses thymine + FMNH2 + NADH + O2 = (Z)-2-methylureidoacrylate + FMN + NAD(+) + H2O + H(+). In terms of biological role, catalyzes the pyrimidine ring opening between N-3 and C-4 by an unusual flavin hydroperoxide-catalyzed mechanism, adding oxygen atoms in the process to yield ureidoacrylate peracid, that immediately reacts with FMN forming ureidoacrylate and FMN-N(5)-oxide. The FMN-N(5)-oxide reacts spontaneously with NADH to produce FMN. Requires the flavin reductase RutF to regenerate FMN in vivo. The sequence is that of Pyrimidine monooxygenase RutA from Escherichia coli O157:H7 (strain EC4115 / EHEC).